We begin with the raw amino-acid sequence, 172 residues long: Shikimate kinase (172 aa).

Glycine 14–threonine 19 lines the ATP pocket. Position 18 (serine 18) interacts with Mg(2+). Aspartate 36, arginine 60, and glycine 82 together coordinate substrate. ATP is bound at residue arginine 120. Residue arginine 140 coordinates substrate. Glutamine 157 contacts ATP.

It belongs to the shikimate kinase family. As to quaternary structure, monomer. Mg(2+) is required as a cofactor.

It is found in the cytoplasm. The enzyme catalyses shikimate + ATP = 3-phosphoshikimate + ADP + H(+). The protein operates within metabolic intermediate biosynthesis; chorismate biosynthesis; chorismate from D-erythrose 4-phosphate and phosphoenolpyruvate: step 5/7. Functionally, catalyzes the specific phosphorylation of the 3-hydroxyl group of shikimic acid using ATP as a cosubstrate. The polypeptide is Shikimate kinase (Aeromonas salmonicida (strain A449)).